We begin with the raw amino-acid sequence, 517 residues long: Xylosidase/arabinosidase (517 aa).

Asp15 (proton acceptor) is an active-site residue. Catalysis depends on Glu185, which acts as the Proton donor.

Belongs to the glycosyl hydrolase 43 family.

It carries out the reaction Hydrolysis of (1-&gt;4)-beta-D-xylans, to remove successive D-xylose residues from the non-reducing termini.. The catalysed reaction is Hydrolysis of terminal non-reducing alpha-L-arabinofuranoside residues in alpha-L-arabinosides.. Functionally, has a 1.6-fold higher activity as an arabinosidase than as a beta-xylosidase when tested on the substrates nitrophenyl-beta-D-xylopyranoside and P-nitrophenyl-alpha-L-arabinofuranoside. The chain is Xylosidase/arabinosidase (xylB) from Butyrivibrio fibrisolvens.